The sequence spans 310 residues: Cysteine synthase (310 aa).

The residue at position 46 (lysine 46) is an N6-(pyridoxal phosphate)lysine. Pyridoxal 5'-phosphate-binding positions include asparagine 76, 180 to 184, and serine 268; that span reads GTGGT.

It belongs to the cysteine synthase/cystathionine beta-synthase family. In terms of assembly, homodimer. Pyridoxal 5'-phosphate serves as cofactor.

It carries out the reaction O-acetyl-L-serine + hydrogen sulfide = L-cysteine + acetate. It functions in the pathway amino-acid biosynthesis; L-cysteine biosynthesis; L-cysteine from L-serine: step 2/2. In Staphylococcus epidermidis (strain ATCC 35984 / DSM 28319 / BCRC 17069 / CCUG 31568 / BM 3577 / RP62A), this protein is Cysteine synthase (cysK).